Here is a 397-residue protein sequence, read N- to C-terminus: S-adenosylmethionine synthase (397 aa).

Residue His-16 coordinates ATP. Asp-18 serves as a coordination point for Mg(2+). Residue Glu-44 coordinates K(+). Residues Glu-57 and Gln-100 each coordinate L-methionine. A flexible loop region spans residues 100–110 (QSPDIAQGVDN). Residues 175–177 (DGK), 242–243 (RF), Asp-251, 257–258 (RK), Ala-274, and Lys-278 contribute to the ATP site. Residue Asp-251 coordinates L-methionine. An L-methionine-binding site is contributed by Lys-282.

It belongs to the AdoMet synthase family. In terms of assembly, homotetramer; dimer of dimers. Mg(2+) is required as a cofactor. Requires K(+) as cofactor.

The protein resides in the cytoplasm. The enzyme catalyses L-methionine + ATP + H2O = S-adenosyl-L-methionine + phosphate + diphosphate. It functions in the pathway amino-acid biosynthesis; S-adenosyl-L-methionine biosynthesis; S-adenosyl-L-methionine from L-methionine: step 1/1. Its function is as follows. Catalyzes the formation of S-adenosylmethionine (AdoMet) from methionine and ATP. The overall synthetic reaction is composed of two sequential steps, AdoMet formation and the subsequent tripolyphosphate hydrolysis which occurs prior to release of AdoMet from the enzyme. This chain is S-adenosylmethionine synthase, found in Leifsonia xyli subsp. xyli (strain CTCB07).